The following is a 188-amino-acid chain: MEARFTRGKSALLERALVRPRTEVSLSAFALLFSELVQHCQSRVFSVAELQARLAALGRQVGARVLDALVAREKGARRETKVLGALLFVKGAVWKALFGKEADKLEQANDDARTFYIIEREPLINTYISVPKENSTLNCASFTAGIVEAVLTHSGFPAKVTAHWHKGTTLMIKFEEAVIARDRALEGR.

Residue Ser10 is modified to Phosphoserine.

The protein belongs to the TRAPP small subunits family. BET3 subfamily. As to quaternary structure, component of the multisubunit TRAPP (transport protein particle) complex, which includes at least TRAPPC2, TRAPPC2L, TRAPPC3, TRAPPC3L, TRAPPC4, TRAPPC5, TRAPPC8, TRAPPC9, TRAPPC10, TRAPPC11 and TRAPPC12.

It localises to the golgi apparatus. The protein localises to the cis-Golgi network. The protein resides in the endoplasmic reticulum. May play a role in vesicular transport from endoplasmic reticulum to Golgi. In Mus musculus (Mouse), this protein is Trafficking protein particle complex subunit 5 (Trappc5).